A 188-amino-acid chain; its full sequence is UPF0398 protein SSP1297 (188 aa).

Belongs to the UPF0398 family.

This is UPF0398 protein SSP1297 from Staphylococcus saprophyticus subsp. saprophyticus (strain ATCC 15305 / DSM 20229 / NCIMB 8711 / NCTC 7292 / S-41).